We begin with the raw amino-acid sequence, 424 residues long: L-glutamine:2-deoxy-scyllo-inosose aminotransferase (424 aa).

An N6-(pyridoxal phosphate)lysine modification is found at Lys202.

This sequence belongs to the DegT/DnrJ/EryC1 family. L-glutamine:2-deoxy-scyllo-inosose/scyllo-inosose aminotransferase subfamily. Pyridoxal 5'-phosphate is required as a cofactor.

The catalysed reaction is 2-deoxy-L-scyllo-inosose + L-glutamine = 2-deoxy-scyllo-inosamine + 2-oxoglutaramate. It catalyses the reaction 3-amino-2,3-dideoxy-scyllo-inosose + L-glutamine = 2-deoxystreptamine + 2-oxoglutaramate. Its pathway is metabolic intermediate biosynthesis; 2-deoxystreptamine biosynthesis; 2-deoxystreptamine from D-glucose 6-phosphate: step 2/4. It functions in the pathway metabolic intermediate biosynthesis; 2-deoxystreptamine biosynthesis; 2-deoxystreptamine from D-glucose 6-phosphate: step 4/4. The protein operates within antibiotic biosynthesis; paromomycin biosynthesis. Its function is as follows. Catalyzes the PLP-dependent transamination of 2-deoxy-scyllo-inosose (2-DOI) to form 2-deoxy-scyllo-inosamine (2-DOIA) using L-glutamine as the amino donor. Also catalyzes the transamination of 3-amino-2,3-dideoxy-scyllo-inosose (keto-2-DOIA) into 2-deoxystreptamine (2-DOS). This Streptomyces paromomycinus (Streptomyces rimosus subsp. paromomycinus) protein is L-glutamine:2-deoxy-scyllo-inosose aminotransferase (parS).